Here is a 65-residue protein sequence, read N- to C-terminus: Large ribosomal subunit protein bL28 (65 aa).

The protein belongs to the bacterial ribosomal protein bL28 family.

This Pseudothermotoga lettingae (strain ATCC BAA-301 / DSM 14385 / NBRC 107922 / TMO) (Thermotoga lettingae) protein is Large ribosomal subunit protein bL28.